The sequence spans 92 residues: Co-chaperonin GroES (92 aa).

This sequence belongs to the GroES chaperonin family. As to quaternary structure, heptamer of 7 subunits arranged in a ring. Interacts with the chaperonin GroEL.

It localises to the cytoplasm. In terms of biological role, together with the chaperonin GroEL, plays an essential role in assisting protein folding. The GroEL-GroES system forms a nano-cage that allows encapsulation of the non-native substrate proteins and provides a physical environment optimized to promote and accelerate protein folding. GroES binds to the apical surface of the GroEL ring, thereby capping the opening of the GroEL channel. This is Co-chaperonin GroES from Methanosarcina mazei (strain ATCC BAA-159 / DSM 3647 / Goe1 / Go1 / JCM 11833 / OCM 88) (Methanosarcina frisia).